The sequence spans 182 residues: Adenine phosphoribosyltransferase (182 aa).

Belongs to the purine/pyrimidine phosphoribosyltransferase family. As to quaternary structure, homodimer.

It localises to the cytoplasm. The enzyme catalyses AMP + diphosphate = 5-phospho-alpha-D-ribose 1-diphosphate + adenine. It participates in purine metabolism; AMP biosynthesis via salvage pathway; AMP from adenine: step 1/1. In terms of biological role, catalyzes a salvage reaction resulting in the formation of AMP, that is energically less costly than de novo synthesis. The sequence is that of Adenine phosphoribosyltransferase from Stutzerimonas stutzeri (Pseudomonas stutzeri).